Here is a 105-residue protein sequence, read N- to C-terminus: Probable molt-inhibiting hormone (105 aa).

The signal sequence occupies residues 1-28 (MYRMPMRFWLTAVVMVVVGALLLDTASA). 3 cysteine pairs are disulfide-bonded: C35-C72, C52-C68, and C55-C81.

This sequence belongs to the arthropod CHH/MIH/GIH/VIH hormone family. Expressed in the postmolt, intermolt, and premolt stages of the shrimp eyestalks and the brain.

The protein localises to the secreted. Functionally, inhibits Y-organs where molting hormone (ecdysteroid) is secreted. A molting cycle is initiated when MIH secretion diminishes or stops. The sequence is that of Probable molt-inhibiting hormone from Metapenaeus ensis (Greasyback shrimp).